The following is a 160-amino-acid chain: Large ribosomal subunit protein eL14 (160 aa).

Positions 136 to 160 are disordered; it reads SDGTPRILKKDRRERLRAEKAKAKK. Residues 146-160 are compositionally biased toward basic and acidic residues; it reads DRRERLRAEKAKAKK.

Belongs to the eukaryotic ribosomal protein eL14 family.

The polypeptide is Large ribosomal subunit protein eL14 (RpL14) (Drosophila virilis (Fruit fly)).